Reading from the N-terminus, the 278-residue chain is Large ribosomal subunit protein uL2 (278 aa).

Disordered stretches follow at residues 26–57 and 225–278; these read RSTP…QGGG and VMNP…NKKR. Residues 258 to 278 show a composition bias toward basic residues; the sequence is RSPKKASNKYIVRRRKTNKKR.

This sequence belongs to the universal ribosomal protein uL2 family. As to quaternary structure, part of the 50S ribosomal subunit. Forms a bridge to the 30S subunit in the 70S ribosome.

One of the primary rRNA binding proteins. Required for association of the 30S and 50S subunits to form the 70S ribosome, for tRNA binding and peptide bond formation. It has been suggested to have peptidyltransferase activity; this is somewhat controversial. Makes several contacts with the 16S rRNA in the 70S ribosome. This Streptomyces coelicolor (strain ATCC BAA-471 / A3(2) / M145) protein is Large ribosomal subunit protein uL2.